Consider the following 119-residue polypeptide: MARVKRAVNARKNHRKVLKLAKGYYGGKSKLFKTANESVIRALRNAYVGRRLRKRDFRKLWIARINAATRINGLSYSKFINGIKLAGIDMNRKMLSEIAINDPKAFSELVEVAKKQINA.

It belongs to the bacterial ribosomal protein bL20 family.

Its function is as follows. Binds directly to 23S ribosomal RNA and is necessary for the in vitro assembly process of the 50S ribosomal subunit. It is not involved in the protein synthesizing functions of that subunit. This Clostridium acetobutylicum (strain ATCC 824 / DSM 792 / JCM 1419 / IAM 19013 / LMG 5710 / NBRC 13948 / NRRL B-527 / VKM B-1787 / 2291 / W) protein is Large ribosomal subunit protein bL20.